The following is a 510-amino-acid chain: Secreted RxLR effector protein 108 (510 aa).

Positions 1 to 20 are cleaved as a signal peptide; the sequence is MRGAYYVLTALFVVTSSDIA. N-linked (GlcNAc...) asparagine glycosylation is present at Asn-47. Positions 48 to 65 match the RxLR-dEER motif; the sequence is RSLRGSRDGRNDLANEER. Disordered regions lie at residues 111 to 139 and 386 to 442; these read RAAK…AKKT and KRSR…DDPK. Positions 122–137 are enriched in basic residues; it reads PAKAAKKTPRAAKAAK. Residues 393-405 are compositionally biased toward polar residues; the sequence is DGNTDTASLPSKQ. The segment covering 429-442 has biased composition (basic and acidic residues); sequence VPTKEIKSSFDDPK.

The protein belongs to the RxLR effector family.

It localises to the secreted. Its subcellular location is the host nucleus. Its function is as follows. Secreted effector that completely suppresses the host cell death induced by cell death-inducing proteins. The polypeptide is Secreted RxLR effector protein 108 (Plasmopara viticola (Downy mildew of grapevine)).